We begin with the raw amino-acid sequence, 64 residues long: Frontoxin V (64 aa).

5 cysteine pairs are disulfide-bonded: C3–C24, C6–C11, C17–C41, C45–C57, and C58–C63.

In terms of tissue distribution, expressed by the venom gland.

Its subcellular location is the secreted. Its function is as follows. Produces peripheral paralysis by blocking neuromuscular transmission at the postsynaptic site. Binds to the muscular nicotinic acetylcholine receptor (nAChR). The sequence is that of Frontoxin V from Micrurus frontalis (Coral snake).